We begin with the raw amino-acid sequence, 164 residues long: Photosystem II extrinsic protein V (164 aa).

An N-terminal signal peptide occupies residues 1 to 27 (MALKSKFLVGSILATFILNGFSSPAQA). Residues cysteine 64, cysteine 67, histidine 68, and histidine 119 each contribute to the heme c site.

This sequence belongs to the cytochrome c family. PsbV subfamily. PSII is composed of 1 copy each of membrane proteins PsbA, PsbB, PsbC, PsbD, PsbE, PsbF, PsbH, PsbI, PsbJ, PsbK, PsbL, PsbM, PsbT, PsbY, PsbZ, Psb30/Ycf12, at least 3 peripheral proteins of the oxygen-evolving complex and a large number of cofactors. It forms dimeric complexes. It depends on heme c as a cofactor.

Its subcellular location is the plastid. It localises to the chloroplast thylakoid membrane. One of the extrinsic, lumenal subunits of photosystem II (PSII). PSII is a light-driven water plastoquinone oxidoreductase, using light energy to abstract electrons from H(2)O, generating a proton gradient subsequently used for ATP formation. The extrinsic proteins stabilize the structure of photosystem II oxygen-evolving complex (OEC), the ion environment of oxygen evolution and protect the OEC against heat-induced inactivation. The chain is Photosystem II extrinsic protein V from Emiliania huxleyi (Coccolithophore).